The following is a 468-amino-acid chain: Peroxisome proliferator-activated receptor alpha (468 aa).

The nuclear receptor DNA-binding region spans 99-173 (NIECRICGDK…VGMSHNAIRF (75 aa)). 2 NR C4-type zinc fingers span residues 102–122 (CRIC…CEGC) and 139–161 (CDRS…FHKC). In terms of domain architecture, NR LBD spans 239–466 (FVIHDMETLC…HPLLQEIYRD (228 aa)). Residues 304-433 (DQVTLLKYGV…PKLLQKMVDL (130 aa)) are required for heterodimerization with RXRA.

The protein belongs to the nuclear hormone receptor family. NR1 subfamily. As to quaternary structure, heterodimer; with RXRA. This heterodimerization is required for DNA binding and transactivation activity. Interacts with NCOA3 coactivator. Interacts with CITED2; the interaction stimulates its transcriptional activity. Also interacts with PPARBP in vitro. Interacts with AKAP13, LPIN1, PRDM16 and coactivator NCOA6. Interacts with ASXL1 and ASXL2. Interacts with PER2. Interacts with SIRT1; the interaction seems to be modulated by NAD(+) levels. Interacts with CRY1 and CRY2. In hepatocytes, interacts with PAQR3 and HUWE1; the interactions promote PPARA poylubiquitination and HUWE1-mediated degradation. In terms of processing, phosphorylated. Ubiquitinated by E3 ubiquitin-protein ligase HUWE1; leading to proteasomal degradation. In terms of tissue distribution, expressed predominantly in liver and kidney.

The protein resides in the nucleus. Its function is as follows. Ligand-activated transcription factor. Key regulator of lipid metabolism. Activated by the endogenous ligand 1-palmitoyl-2-oleoyl-sn-glycerol-3-phosphocholine (16:0/18:1-GPC). Activated by oleylethanolamide, a naturally occurring lipid that regulates satiety. Receptor for peroxisome proliferators such as hypolipidemic drugs and fatty acids. Regulates the peroxisomal beta-oxidation pathway of fatty acids. Functions as a transcription activator for the ACOX1 and P450 genes. Transactivation activity requires heterodimerization with RXRA and is antagonized by NR2C2. May be required for the propagation of clock information to metabolic pathways regulated by PER2. The sequence is that of Peroxisome proliferator-activated receptor alpha (Ppara) from Rattus norvegicus (Rat).